Consider the following 600-residue polypeptide: Elongation factor 4 (600 aa).

A tr-type G domain is found at aspartate 4–glutamate 186. GTP-binding positions include aspartate 16–threonine 21 and asparagine 133–aspartate 136.

This sequence belongs to the TRAFAC class translation factor GTPase superfamily. Classic translation factor GTPase family. LepA subfamily.

The protein resides in the cell inner membrane. The enzyme catalyses GTP + H2O = GDP + phosphate + H(+). Functionally, required for accurate and efficient protein synthesis under certain stress conditions. May act as a fidelity factor of the translation reaction, by catalyzing a one-codon backward translocation of tRNAs on improperly translocated ribosomes. Back-translocation proceeds from a post-translocation (POST) complex to a pre-translocation (PRE) complex, thus giving elongation factor G a second chance to translocate the tRNAs correctly. Binds to ribosomes in a GTP-dependent manner. The protein is Elongation factor 4 of Geobacter sulfurreducens (strain ATCC 51573 / DSM 12127 / PCA).